A 643-amino-acid chain; its full sequence is Phosphomethylpyrimidine synthase (643 aa).

Residues Asn-248, Met-277, Tyr-306, His-342, Ser-362–Gly-364, Asp-403–Arg-406, and Glu-442 contribute to the substrate site. His-446 contacts Zn(2+). Residue Tyr-469 coordinates substrate. His-510 is a binding site for Zn(2+). Positions 590, 593, and 598 each coordinate [4Fe-4S] cluster.

It belongs to the ThiC family. In terms of assembly, homodimer. [4Fe-4S] cluster is required as a cofactor.

It carries out the reaction 5-amino-1-(5-phospho-beta-D-ribosyl)imidazole + S-adenosyl-L-methionine = 4-amino-2-methyl-5-(phosphooxymethyl)pyrimidine + CO + 5'-deoxyadenosine + formate + L-methionine + 3 H(+). It functions in the pathway cofactor biosynthesis; thiamine diphosphate biosynthesis. Catalyzes the synthesis of the hydroxymethylpyrimidine phosphate (HMP-P) moiety of thiamine from aminoimidazole ribotide (AIR) in a radical S-adenosyl-L-methionine (SAM)-dependent reaction. The sequence is that of Phosphomethylpyrimidine synthase from Burkholderia multivorans (strain ATCC 17616 / 249).